The following is a 60-amino-acid chain: UPF0434 protein Vapar_2640 (60 aa).

The protein belongs to the UPF0434 family.

This chain is UPF0434 protein Vapar_2640, found in Variovorax paradoxus (strain S110).